The sequence spans 116 residues: Large ribosomal subunit protein uL18 (116 aa).

It belongs to the universal ribosomal protein uL18 family. Part of the 50S ribosomal subunit; part of the 5S rRNA/L5/L18/L25 subcomplex. Contacts the 5S and 23S rRNAs.

Functionally, this is one of the proteins that bind and probably mediate the attachment of the 5S RNA into the large ribosomal subunit, where it forms part of the central protuberance. The sequence is that of Large ribosomal subunit protein uL18 from Azotobacter vinelandii (strain DJ / ATCC BAA-1303).